Reading from the N-terminus, the 77-residue chain is Small ribosomal subunit protein uS17 (77 aa).

The protein belongs to the universal ribosomal protein uS17 family. In terms of assembly, part of the 30S ribosomal subunit.

Functionally, one of the primary rRNA binding proteins, it binds specifically to the 5'-end of 16S ribosomal RNA. In Wolbachia sp. subsp. Brugia malayi (strain TRS), this protein is Small ribosomal subunit protein uS17.